The sequence spans 211 residues: Uracil phosphoribosyltransferase (211 aa).

Residues Arg-79, Arg-104, and 131 to 139 (DPMLATGGS) contribute to the 5-phospho-alpha-D-ribose 1-diphosphate site. Uracil is bound by residues Ile-196 and 201-203 (GDA). Asp-202 lines the 5-phospho-alpha-D-ribose 1-diphosphate pocket.

It belongs to the UPRTase family. Mg(2+) serves as cofactor.

The catalysed reaction is UMP + diphosphate = 5-phospho-alpha-D-ribose 1-diphosphate + uracil. The protein operates within pyrimidine metabolism; UMP biosynthesis via salvage pathway; UMP from uracil: step 1/1. Allosterically activated by GTP. Functionally, catalyzes the conversion of uracil and 5-phospho-alpha-D-ribose 1-diphosphate (PRPP) to UMP and diphosphate. The chain is Uracil phosphoribosyltransferase from Limosilactobacillus reuteri (strain DSM 20016) (Lactobacillus reuteri).